Here is a 425-residue protein sequence, read N- to C-terminus: MATASFDSAPGASRALPAIEKAPEVTALSTLPGRKASLVGLTREGLKQALIGIGVPERETRMRVSQVWHWIYVRGAREFSEMTNVGKGLKAQLADHFTLERPEVVTEQVSRDGTRKWLLRMAPTGAHDHNRGAEIECVYIPGDDRGTLCVSSQVGCTLTCSFCHTGTQRLVRNLSTAEIVAQLVVARDALGDFTGQMPGKDGGEPGRLVTNIVFMGMGEPLYNLDAVIDAIAVMSDQEGLALSRRRITVSTSGVVPQMERLGLEANAMLAISLHAVRDELRDELVPLNRKYPIAQLLDACRNYPGLSNARRITFEYVMLKGVNDSDADARALVRLLKGIPAKINLIPFNPWPGSKYECSDWERIERFSEIVFTAGYASPVRTPRGRDILAACGQLKSETEKLRARARLMLEEGMGAEAVYADQVD.

E136 (proton acceptor) is an active-site residue. Positions 142–381 (GDDRGTLCVS…FTAGYASPVR (240 aa)) constitute a Radical SAM core domain. A disulfide bond links C149 and C392. Positions 156, 160, and 163 each coordinate [4Fe-4S] cluster. S-adenosyl-L-methionine is bound by residues 218-219 (GE), S250, 272-274 (SLH), and N349. C392 acts as the S-methylcysteine intermediate in catalysis.

Belongs to the radical SAM superfamily. RlmN family. Requires [4Fe-4S] cluster as cofactor.

The protein resides in the cytoplasm. It catalyses the reaction adenosine(2503) in 23S rRNA + 2 reduced [2Fe-2S]-[ferredoxin] + 2 S-adenosyl-L-methionine = 2-methyladenosine(2503) in 23S rRNA + 5'-deoxyadenosine + L-methionine + 2 oxidized [2Fe-2S]-[ferredoxin] + S-adenosyl-L-homocysteine. The enzyme catalyses adenosine(37) in tRNA + 2 reduced [2Fe-2S]-[ferredoxin] + 2 S-adenosyl-L-methionine = 2-methyladenosine(37) in tRNA + 5'-deoxyadenosine + L-methionine + 2 oxidized [2Fe-2S]-[ferredoxin] + S-adenosyl-L-homocysteine. In terms of biological role, specifically methylates position 2 of adenine 2503 in 23S rRNA and position 2 of adenine 37 in tRNAs. m2A2503 modification seems to play a crucial role in the proofreading step occurring at the peptidyl transferase center and thus would serve to optimize ribosomal fidelity. This Methylorubrum extorquens (strain PA1) (Methylobacterium extorquens) protein is Dual-specificity RNA methyltransferase RlmN.